The primary structure comprises 273 residues: Undecaprenyl-diphosphatase (273 aa).

7 helical membrane passes run 6–26 (SLLIAAILGVVEGLTEFLPVS), 45–65 (AKTFEVVIQLGSILAVVVMFW), 90–110 (LTLIHILLGMIPAVVLGLLFH), 116–136 (LFNPINVMYALVVGGLLLIAA), 190–210 (YAASEFSFLLAVPMMMGATAL), 222–242 (GDIPMFAVGFITAFVVALIAI), and 252–272 (ISFIPFAIYRFIVAAAVYVVF).

This sequence belongs to the UppP family.

Its subcellular location is the cell inner membrane. The catalysed reaction is di-trans,octa-cis-undecaprenyl diphosphate + H2O = di-trans,octa-cis-undecaprenyl phosphate + phosphate + H(+). Its function is as follows. Catalyzes the dephosphorylation of undecaprenyl diphosphate (UPP). Confers resistance to bacitracin. In Escherichia coli O127:H6 (strain E2348/69 / EPEC), this protein is Undecaprenyl-diphosphatase.